Consider the following 65-residue polypeptide: Beta-defensin 106A (65 aa).

Positions 1 to 20 (MRTFLFLFAVLFFLTPAKNA) are cleaved as a signal peptide. Intrachain disulfides connect Cys26–Cys53, Cys33–Cys47, and Cys37–Cys54.

Belongs to the beta-defensin family. As to quaternary structure, monomer. Interacts with CCR2 (via extracellular N-terminal region); this interaction may preferentially require specific tyrosine sulfation on CCR2.

It is found in the secreted. Its subcellular location is the membrane. Functionally, has antibacterial activity. Acts as a ligand for C-C chemokine receptor CCR2. The protein is Beta-defensin 106A (DEFB106A) of Gorilla gorilla gorilla (Western lowland gorilla).